The primary structure comprises 138 residues: Transcription antitermination protein NusB (138 aa).

It belongs to the NusB family.

Functionally, involved in transcription antitermination. Required for transcription of ribosomal RNA (rRNA) genes. Binds specifically to the boxA antiterminator sequence of the ribosomal RNA (rrn) operons. This Alkaliphilus oremlandii (strain OhILAs) (Clostridium oremlandii (strain OhILAs)) protein is Transcription antitermination protein NusB.